A 280-amino-acid polypeptide reads, in one-letter code: DegV domain-containing protein TTE1491 (280 aa).

Residues 4 to 279 (IAIVTDSLSD…PDAAGVFFEE (276 aa)) enclose the DegV domain. Hexadecanoate contacts are provided by threonine 61 and serine 93.

May bind long-chain fatty acids, such as palmitate, and may play a role in lipid transport or fatty acid metabolism. This Caldanaerobacter subterraneus subsp. tengcongensis (strain DSM 15242 / JCM 11007 / NBRC 100824 / MB4) (Thermoanaerobacter tengcongensis) protein is DegV domain-containing protein TTE1491.